Consider the following 145-residue polypeptide: Basic phospholipase A2 S11-61 (145 aa).

The signal sequence occupies residues 1 to 19; that stretch reads MYPVHLLVLLAVCVSLLGA. Positions 20-27 are excised as a propeptide; that stretch reads SNIPPQPL. 7 cysteine pairs are disulfide-bonded: Cys-38/Cys-98, Cys-54/Cys-144, Cys-56/Cys-72, Cys-71/Cys-125, Cys-78/Cys-118, Cys-87/Cys-111, and Cys-105/Cys-116. The Ca(2+) site is built by Tyr-55, Gly-57, and Gly-59. His-75 is an active-site residue. Residue Asp-76 coordinates Ca(2+). Asp-119 is an active-site residue.

It belongs to the phospholipase A2 family. Group I subfamily. D49 sub-subfamily. Ca(2+) is required as a cofactor. As to expression, expressed by the venom gland.

It localises to the secreted. The enzyme catalyses a 1,2-diacyl-sn-glycero-3-phosphocholine + H2O = a 1-acyl-sn-glycero-3-phosphocholine + a fatty acid + H(+). In terms of biological role, snake venom phospholipase A2 (PLA2) that inhibits collagen-induced platelet aggregation. PLA2 catalyzes the calcium-dependent hydrolysis of the 2-acyl groups in 3-sn-phosphoglycerides. The sequence is that of Basic phospholipase A2 S11-61 from Austrelaps superbus (Lowland copperhead snake).